We begin with the raw amino-acid sequence, 217 residues long: Adenylate kinase (217 aa).

Residue 10–15 participates in ATP binding; the sequence is GAGKGT. The tract at residues 30-59 is NMP; it reads STGDMLRAAVKAGTPLGLQAKDIMASGGLV. AMP is bound by residues T31, R36, 57–59, 85–88, and Q92; these read GLV and GFPR. The LID stretch occupies residues 122 to 159; sequence GRRVHEASGRVYHIIHNAPRVEGHDDVTGEPLVQRPDD. ATP is bound by residues R123 and 132–133; that span reads VY. AMP contacts are provided by R156 and R167. G203 contributes to the ATP binding site.

This sequence belongs to the adenylate kinase family. As to quaternary structure, monomer.

The protein localises to the cytoplasm. It catalyses the reaction AMP + ATP = 2 ADP. It participates in purine metabolism; AMP biosynthesis via salvage pathway; AMP from ADP: step 1/1. In terms of biological role, catalyzes the reversible transfer of the terminal phosphate group between ATP and AMP. Plays an important role in cellular energy homeostasis and in adenine nucleotide metabolism. The polypeptide is Adenylate kinase (Cellvibrio japonicus (strain Ueda107) (Pseudomonas fluorescens subsp. cellulosa)).